Consider the following 386-residue polypeptide: Protein phosphatase methylesterase 1 (386 aa).

Residues 1 to 38 (MSALEKSMHLGRLPSRPPLPGSGGSQSGAKMRMGPGRK) are disordered. S15 bears the Phosphoserine mark. The residue at position 16 (R16) is an Asymmetric dimethylarginine; alternate. R16 is modified (omega-N-methylarginine; alternate). The active site involves S156. Positions 255–265 (IEEEEEDEEGS) are enriched in acidic residues. The segment at 255–280 (IEEEEEDEEGSESVNKRKKEDDMETK) is disordered. The span at 268 to 280 (VNKRKKEDDMETK) shows a compositional bias: basic and acidic residues. H349 is a catalytic residue.

It belongs to the AB hydrolase superfamily. As to quaternary structure, binds PPP2CA and PPP2CB. In terms of processing, phosphorylated by SIK1 following increases in intracellular sodium, leading to dissociation from the protein phosphatase 2A (PP2A) complex and subsequent dephosphorylation of sodium/potassium-transporting ATPase ATP1A1.

It catalyses the reaction [phosphatase 2A protein]-C-terminal L-leucine methyl ester + H2O = [phosphatase 2A protein]-C-terminal L-leucine + methanol + H(+). Functionally, demethylates proteins that have been reversibly carboxymethylated. Demethylates PPP2CB (in vitro) and PPP2CA. Binding to PPP2CA displaces the manganese ion and inactivates the enzyme. The sequence is that of Protein phosphatase methylesterase 1 (Ppme1) from Rattus norvegicus (Rat).